An 852-amino-acid chain; its full sequence is Elongation factor 2 (852 aa).

A tr-type G domain is found at 17–356; sequence RNIRNMSVIA…MIAFHLPSPV (340 aa). 26 to 33 contacts GTP; sequence AHVDHGKS. Phosphothreonine is present on residues Thr-57 and Thr-59. Residues 170-173 and 227-229 contribute to the GTP site; these read NKMD and SGL. At His-709 the chain carries Diphthamide.

This sequence belongs to the TRAFAC class translation factor GTPase superfamily. Classic translation factor GTPase family. EF-G/EF-2 subfamily. Phosphorylation by EF-2 kinase completely inactivates EF-2. In terms of processing, AMPylated by fic-1.

Its subcellular location is the cytoplasm. It catalyses the reaction GTP + H2O = GDP + phosphate + H(+). Its function is as follows. Catalyzes the GTP-dependent ribosomal translocation step during translation elongation. During this step, the ribosome changes from the pre-translocational (PRE) to the post-translocational (POST) state as the newly formed A-site-bound peptidyl-tRNA and P-site-bound deacylated tRNA move to the P and E sites, respectively. Catalyzes the coordinated movement of the two tRNA molecules, the mRNA and conformational changes in the ribosome. Involved in the morphogenesis of epidermal tissues. In Caenorhabditis elegans, this protein is Elongation factor 2 (eef-2).